The following is a 187-amino-acid chain: Elongation factor P (187 aa).

This sequence belongs to the elongation factor P family.

It is found in the cytoplasm. It participates in protein biosynthesis; polypeptide chain elongation. Involved in peptide bond synthesis. Stimulates efficient translation and peptide-bond synthesis on native or reconstituted 70S ribosomes in vitro. Probably functions indirectly by altering the affinity of the ribosome for aminoacyl-tRNA, thus increasing their reactivity as acceptors for peptidyl transferase. The protein is Elongation factor P of Rhodococcus opacus (strain B4).